The following is a 431-amino-acid chain: Divergent protein kinase domain 1B (431 aa).

Residues 1-30 (MRRLRRLVHLVLLCPFSKGLQGRLPGLRVK) lie on the Cytoplasmic side of the membrane. The May mediate ER retention signature appears at 5 to 6 (RR). The helical transmembrane segment at 31-51 (YVLLVWLGIFVGSWMVYVHYS) threads the bilayer. Topologically, residues 52-431 (SYSELCRGHV…WREISNTNYS (380 aa)) are lumenal. Intrachain disulfides connect Cys57–Cys94 and Cys62–Cys117.

It belongs to the DIPK family. In terms of processing, among the many cysteines in the lumenal domain, most are probably involved in disulfide bonds. In terms of tissue distribution, expressed in kidney, testis, lung, heart, stomach, intestine, pancreas, liver and salivary gland. Strongly expressed in acute pancreatitis, brain, and in peripheral endothelial cells.

It is found in the endoplasmic reticulum membrane. The polypeptide is Divergent protein kinase domain 1B (Dipk1b) (Mus musculus (Mouse)).